The following is a 173-amino-acid chain: MTYFMLFLGLCFVLGGLAVASNPSPYYGVVGLVLASVVGCGWLMSLGMSFVSLVLFMVYLGGMLVVFVYSVSLAADPFPEAWGDWRVVGYGVSFIVVLAAGAVVGGLVGCWDSGVITVDSVGMLSVRLDFSGVAMFYSCGVGMFLVAGWGLLLTLFVVLELVRGLSCGAIRAV.

A run of 5 helical transmembrane segments spans residues 1–21, 27–47, 48–68, 87–107, and 139–159; these read MTYF…AVAS, YGVV…MSLG, MSFV…VVFV, VVGY…VGGL, and CGVG…FVVL.

It belongs to the complex I subunit 6 family.

The protein resides in the mitochondrion membrane. It catalyses the reaction a ubiquinone + NADH + 5 H(+)(in) = a ubiquinol + NAD(+) + 4 H(+)(out). Functionally, core subunit of the mitochondrial membrane respiratory chain NADH dehydrogenase (Complex I) that is believed to belong to the minimal assembly required for catalysis. Complex I functions in the transfer of electrons from NADH to the respiratory chain. The immediate electron acceptor for the enzyme is believed to be ubiquinone. This chain is NADH-ubiquinone oxidoreductase chain 6 (MT-ND6), found in Synthliboramphus antiquus (Ancient murrelet).